Here is a 568-residue protein sequence, read N- to C-terminus: Cyclin-dependent kinase-like 2 (568 aa).

The region spanning 4–289 (YENLGLVGEG…CADLLRHDFF (286 aa)) is the Protein kinase domain. ATP-binding positions include 10 to 18 (VGEGSYGMV) and Lys-33. A [NKR]KIAxRE motif is present at residues 45 to 51 (KKIAMRE). Asp-126 functions as the Proton acceptor in the catalytic mechanism. Disordered stretches follow at residues 309–333 (DARN…LGEE) and 545–568 (SHQG…EHQH). The span at 322-333 (RKKEKDDALGEE) shows a compositional bias: basic and acidic residues.

It belongs to the protein kinase superfamily. CMGC Ser/Thr protein kinase family. CDC2/CDKX subfamily. In terms of tissue distribution, expressed in testis, kidney, lung and brain.

Its subcellular location is the cytoplasm. The protein resides in the nucleus. The catalysed reaction is L-seryl-[protein] + ATP = O-phospho-L-seryl-[protein] + ADP + H(+). It carries out the reaction L-threonyl-[protein] + ATP = O-phospho-L-threonyl-[protein] + ADP + H(+). In Mus musculus (Mouse), this protein is Cyclin-dependent kinase-like 2.